A 416-amino-acid chain; its full sequence is Glutamyl-tRNA reductase (416 aa).

Residues 50-53, Ser109, 114-116, and Gln120 contribute to the substrate site; these read TCNR and EPQ. Residue Cys51 is the Nucleophile of the active site. 189 to 194 is a binding site for NADP(+); sequence GAGEMI.

The protein belongs to the glutamyl-tRNA reductase family. Homodimer.

It carries out the reaction (S)-4-amino-5-oxopentanoate + tRNA(Glu) + NADP(+) = L-glutamyl-tRNA(Glu) + NADPH + H(+). The protein operates within porphyrin-containing compound metabolism; protoporphyrin-IX biosynthesis; 5-aminolevulinate from L-glutamyl-tRNA(Glu): step 1/2. In terms of biological role, catalyzes the NADPH-dependent reduction of glutamyl-tRNA(Glu) to glutamate 1-semialdehyde (GSA). The sequence is that of Glutamyl-tRNA reductase from Ruthia magnifica subsp. Calyptogena magnifica.